Here is a 156-residue protein sequence, read N- to C-terminus: Small ribosomal subunit protein uS7 (156 aa).

The protein belongs to the universal ribosomal protein uS7 family. As to quaternary structure, part of the 30S ribosomal subunit. Contacts proteins S9 and S11.

In terms of biological role, one of the primary rRNA binding proteins, it binds directly to 16S rRNA where it nucleates assembly of the head domain of the 30S subunit. Is located at the subunit interface close to the decoding center, probably blocks exit of the E-site tRNA. The protein is Small ribosomal subunit protein uS7 of Kineococcus radiotolerans (strain ATCC BAA-149 / DSM 14245 / SRS30216).